The chain runs to 1080 residues: Zorya protein ZorD (1080 aa).

In terms of domain architecture, Helicase ATP-binding spans 596 to 779; it reads LRSPEETAGC…WSLFDFAQPG (184 aa). The Helicase C-terminal domain maps to 904–1069; the sequence is KLNWLLKILA…DMLCATPDLS (166 aa).

Functionally, component of antiviral defense system Zorya type I, composed of ZorA, ZorB, ZorC and ZorD. Expression of Zorya type I in E.coli (strain MG1655) confers 10,000-fold resistance to phage SECphi27, 100-fold resistance to lambda, and 10-fold resistance to T7. While most T7 infected Zorya-containing cells undergo abortive infection, a minority produce viable phage progeny. These eventually accumulate to a high multiplicity of infection, leading to culture collapse by 2 hours after initial infection. ZorA and ZorB probably assemble in the cell inner membrane and exert their effect there. This may have ATPase activity. This Escherichia coli O139:H28 (strain E24377A / ETEC) protein is Zorya protein ZorD.